The primary structure comprises 446 residues: Exodeoxyribonuclease 7 large subunit (446 aa).

Belongs to the XseA family. As to quaternary structure, heterooligomer composed of large and small subunits.

It is found in the cytoplasm. The enzyme catalyses Exonucleolytic cleavage in either 5'- to 3'- or 3'- to 5'-direction to yield nucleoside 5'-phosphates.. Its function is as follows. Bidirectionally degrades single-stranded DNA into large acid-insoluble oligonucleotides, which are then degraded further into small acid-soluble oligonucleotides. The polypeptide is Exodeoxyribonuclease 7 large subunit (Streptococcus pyogenes serotype M6 (strain ATCC BAA-946 / MGAS10394)).